A 101-amino-acid chain; its full sequence is uncharacterized protein (101 aa).

Residues 58-80 (VFPSLNIIILMSDALMFFLRSSI) form a helical membrane-spanning segment.

It localises to the membrane. This is an uncharacterized protein from Saccharomyces cerevisiae (strain ATCC 204508 / S288c) (Baker's yeast).